We begin with the raw amino-acid sequence, 159 residues long: Acetolactate synthase small subunit (159 aa).

One can recognise an ACT domain in the interval 5 to 79 (ILSILLENES…DVLKVTEIED (75 aa)).

This sequence belongs to the acetolactate synthase small subunit family. As to quaternary structure, dimer of large and small chains.

The catalysed reaction is 2 pyruvate + H(+) = (2S)-2-acetolactate + CO2. It participates in amino-acid biosynthesis; L-isoleucine biosynthesis; L-isoleucine from 2-oxobutanoate: step 1/4. The protein operates within amino-acid biosynthesis; L-valine biosynthesis; L-valine from pyruvate: step 1/4. The polypeptide is Acetolactate synthase small subunit (ilvH) (Buchnera aphidicola subsp. Baizongia pistaciae (strain Bp)).